The sequence spans 364 residues: SH3 and cysteine-rich domain-containing protein 3 (364 aa).

2 disordered regions span residues 1–89 (MTEK…NDKP) and 189–244 (NKER…HKQP). The segment covering 64 to 78 (YEEEEEEEEEEEEPP) has biased composition (acidic residues). The Phorbol-ester/DAG-type zinc finger occupies 89 to 140 (PHKFKDHFFKKPKFCDVCARMIVLNNKFGLRCKNCKTNIHEHCQSYVEMQRC). Positions 212-242 (ESARPEEGKPQDGNPEGDKKAEKKTPDDKHK) are enriched in basic and acidic residues. SH3 domains are found at residues 247–306 (QQSH…RVRA) and 307–364 (GERV…LEEI).

As to quaternary structure, interacts (via SH3 domains) with the calcium channels CACNA1S and CACNA1C. Component of a calcium channel complex with CACNA1S and CACNB1. Component of a calcium channel complex with CACNA1C and CACNB1.

It is found in the cytoplasm. Its subcellular location is the cell membrane. The protein localises to the sarcolemma. The protein resides in the T-tubule. In terms of biological role, required for normal excitation-contraction coupling in skeletal muscle and for normal muscle contraction in response to membrane depolarization. Required for normal Ca(2+) release from the sarcplasmic reticulum, which ultimately leads to muscle contraction. Probably functions via its effects on muscle calcium channels. Increases CACNA1S channel activity, in addition to its role in enhancing the expression of CACNA1S at the cell membrane. Has a redundant role in promoting the expression of the calcium channel CACNA1S at the cell membrane. Slows down the inactivation rate of the calcium channel CACNA1C. The protein is SH3 and cysteine-rich domain-containing protein 3 (STAC3) of Homo sapiens (Human).